Here is a 90-residue protein sequence, read N- to C-terminus: Small ribosomal subunit protein uS19 (90 aa).

This sequence belongs to the universal ribosomal protein uS19 family.

Its function is as follows. Protein S19 forms a complex with S13 that binds strongly to the 16S ribosomal RNA. The chain is Small ribosomal subunit protein uS19 from Mesomycoplasma hyopneumoniae (strain 232) (Mycoplasma hyopneumoniae).